The primary structure comprises 488 residues: Protein nucleotidyltransferase YdiU (488 aa).

The ATP site is built by glycine 91, glycine 93, arginine 94, lysine 114, aspartate 126, glycine 127, arginine 177, and arginine 184. Aspartate 253 acts as the Proton acceptor in catalysis. Residues asparagine 254 and aspartate 263 each coordinate Mg(2+). Aspartate 263 provides a ligand contact to ATP.

The protein belongs to the SELO family. The cofactor is Mg(2+). It depends on Mn(2+) as a cofactor.

The catalysed reaction is L-seryl-[protein] + ATP = 3-O-(5'-adenylyl)-L-seryl-[protein] + diphosphate. The enzyme catalyses L-threonyl-[protein] + ATP = 3-O-(5'-adenylyl)-L-threonyl-[protein] + diphosphate. It catalyses the reaction L-tyrosyl-[protein] + ATP = O-(5'-adenylyl)-L-tyrosyl-[protein] + diphosphate. It carries out the reaction L-histidyl-[protein] + UTP = N(tele)-(5'-uridylyl)-L-histidyl-[protein] + diphosphate. The catalysed reaction is L-seryl-[protein] + UTP = O-(5'-uridylyl)-L-seryl-[protein] + diphosphate. The enzyme catalyses L-tyrosyl-[protein] + UTP = O-(5'-uridylyl)-L-tyrosyl-[protein] + diphosphate. Nucleotidyltransferase involved in the post-translational modification of proteins. It can catalyze the addition of adenosine monophosphate (AMP) or uridine monophosphate (UMP) to a protein, resulting in modifications known as AMPylation and UMPylation. The polypeptide is Protein nucleotidyltransferase YdiU (Bacillus cereus (strain ATCC 14579 / DSM 31 / CCUG 7414 / JCM 2152 / NBRC 15305 / NCIMB 9373 / NCTC 2599 / NRRL B-3711)).